The sequence spans 185 residues: Ribosome-recycling factor (185 aa).

This sequence belongs to the RRF family.

It localises to the cytoplasm. Functionally, responsible for the release of ribosomes from messenger RNA at the termination of protein biosynthesis. May increase the efficiency of translation by recycling ribosomes from one round of translation to another. The polypeptide is Ribosome-recycling factor (Campylobacter jejuni subsp. jejuni serotype O:2 (strain ATCC 700819 / NCTC 11168)).